Here is a 190-residue protein sequence, read N- to C-terminus: Probable RNA-binding protein 18 (190 aa).

Residues 25-106 (HRLWIGNLDP…KKLVVRWAHA (82 aa)) enclose the RRM domain. The tract at residues 166 to 190 (VYSYFKPPDKKRTTPYSRTAWKSRR) is disordered.

This Mus musculus (Mouse) protein is Probable RNA-binding protein 18 (Rbm18).